The primary structure comprises 267 residues: Strigolactone esterase D14 (267 aa).

The active-site Nucleophile is serine 97. Catalysis depends on residues aspartate 218 and histidine 247.

Belongs to the AB hydrolase superfamily. Interacts with SMXL6, SMXL7 and SMXL8. The interaction with SMXLs occurs in the presence of (2'R) stereoisomers of strigolactones, but not (2'S) stereoisomers. Interacts with MAX2. Forms a complex with MAX2 and SKP1A/ASK1 in presence of strigolactone. As to expression, expressed at high levels in rosette and cauline leaves and at lower levels in axillary buds, inflorescences, stems, roots and developing vascular tissue of cotyledons.

Its subcellular location is the cytoplasm. The protein localises to the nucleus. Involved in strigolactone signaling pathway. Does not move long distances acropetally in the plant to regulate shoot branching and is rapidly degraded in the presence of strigolactones. Functions downstream of strigolactone synthesis, as a component of hormone signaling and as an enzyme that participates in the conversion of strigolactones to the bioactive form. Acts probably as a strigolactone receptor. Strigolactones are hormones that inhibit tillering and shoot branching through the MAX-dependent pathway, contribute to the regulation of shoot architectural response to phosphate-limiting conditions and function as rhizosphere signal that stimulates hyphal branching of arbuscular mycorrhizal fungi and trigger seed germination of root parasitic weeds. Hydrolyzes methyl carlactonoate (MeCLA), but not carlactone (CL) or carlactonoic acid (CLA). Hydrolyzes the butenolide ring of strigolactones. The initial nucleophilic attack causes an electron shift, followed by the addition of a water molecule, to lead to the release of the ABC ring product and the formation of a 'Ser-97'-stabilized open lactone intermediate. Has no esterase activity for 4-nitrophenyl butyrate. Binds and hydrolyzes the synthetic strigolactone analog GR24 in vitro. Forms a stable covalent complex with the D-ring of strigolactone, which is essential for hormone bioactivity. The D-ring is attached to His-247 of the catalytic triad. The hydrolysis of strigolactone into a covalently linked intermediate molecule initiates a conformational change of D14 to facilitate interaction with MAX2 and formation of the D14-MAX2-SKP1/ASK1 complex to trigger strigolactone signaling. This mechanism defines D14 as a non-canonical hormone receptor with dual functions to generate and sense the active form of strigolactone. This chain is Strigolactone esterase D14, found in Arabidopsis thaliana (Mouse-ear cress).